The sequence spans 143 residues: Transcription antitermination protein NusB (143 aa).

This sequence belongs to the NusB family.

Involved in transcription antitermination. Required for transcription of ribosomal RNA (rRNA) genes. Binds specifically to the boxA antiterminator sequence of the ribosomal RNA (rrn) operons. The protein is Transcription antitermination protein NusB of Mannheimia succiniciproducens (strain KCTC 0769BP / MBEL55E).